The following is a 1066-amino-acid chain: Isoleucine--tRNA ligase (1066 aa).

The 'HIGH' region signature appears at 47 to 57; that stretch reads PYTTGYIHLGT. The short motif at 594 to 598 is the 'KMSKS' region element; that stretch reads KMSKS. Residue Lys597 participates in ATP binding.

Belongs to the class-I aminoacyl-tRNA synthetase family. IleS type 2 subfamily. Monomer. The cofactor is Zn(2+).

It is found in the cytoplasm. It carries out the reaction tRNA(Ile) + L-isoleucine + ATP = L-isoleucyl-tRNA(Ile) + AMP + diphosphate. In terms of biological role, catalyzes the attachment of isoleucine to tRNA(Ile). As IleRS can inadvertently accommodate and process structurally similar amino acids such as valine, to avoid such errors it has two additional distinct tRNA(Ile)-dependent editing activities. One activity is designated as 'pretransfer' editing and involves the hydrolysis of activated Val-AMP. The other activity is designated 'posttransfer' editing and involves deacylation of mischarged Val-tRNA(Ile). The sequence is that of Isoleucine--tRNA ligase from Methanocorpusculum labreanum (strain ATCC 43576 / DSM 4855 / Z).